Here is a 353-residue protein sequence, read N- to C-terminus: UDP-N-acetylglucosamine--N-acetylmuramyl-(pentapeptide) pyrophosphoryl-undecaprenol N-acetylglucosamine transferase (353 aa).

UDP-N-acetyl-alpha-D-glucosamine contacts are provided by residues 10–12 (TGG), Asn124, Ser183, and Gln283.

The protein belongs to the glycosyltransferase 28 family. MurG subfamily.

The protein localises to the cell inner membrane. The catalysed reaction is di-trans,octa-cis-undecaprenyl diphospho-N-acetyl-alpha-D-muramoyl-L-alanyl-D-glutamyl-meso-2,6-diaminopimeloyl-D-alanyl-D-alanine + UDP-N-acetyl-alpha-D-glucosamine = di-trans,octa-cis-undecaprenyl diphospho-[N-acetyl-alpha-D-glucosaminyl-(1-&gt;4)]-N-acetyl-alpha-D-muramoyl-L-alanyl-D-glutamyl-meso-2,6-diaminopimeloyl-D-alanyl-D-alanine + UDP + H(+). It functions in the pathway cell wall biogenesis; peptidoglycan biosynthesis. Cell wall formation. Catalyzes the transfer of a GlcNAc subunit on undecaprenyl-pyrophosphoryl-MurNAc-pentapeptide (lipid intermediate I) to form undecaprenyl-pyrophosphoryl-MurNAc-(pentapeptide)GlcNAc (lipid intermediate II). The chain is UDP-N-acetylglucosamine--N-acetylmuramyl-(pentapeptide) pyrophosphoryl-undecaprenol N-acetylglucosamine transferase from Helicobacter pylori (strain J99 / ATCC 700824) (Campylobacter pylori J99).